A 2692-amino-acid chain; its full sequence is Thyroglobulin (2692 aa).

Positions 1-19 are cleaved as a signal peptide; sequence MALALWVFALLGSACLVSA. Tyr-24 carries the post-translational modification Iodotyrosine; alternate. Sulfotyrosine; alternate is present on Tyr-24. Residue Tyr-24 is modified to Thyroxine; alternate. Triiodothyronine; alternate is present on Tyr-24. Thyroglobulin type-1 domains are found at residues 31–92, 93–160, and 161–248; these read LRPC…PVAC, LSFC…PARC, and PGSC…LAGT. Cystine bridges form between Cys-34–Cys-52, Cys-63–Cys-70, Cys-72–Cys-92, Cys-96–Cys-120, Cys-131–Cys-138, Cys-140–Cys-160, Cys-164–Cys-183, and Cys-194–Cys-235. Tyr-108 carries the iodotyrosine modification. Asn-110 is a glycosylation site (N-linked (GlcNAc...) asparagine). An Iodotyrosine; alternate modification is found at Tyr-149. Position 149 is a diiodotyrosine; alternate (Tyr-149). Residue Asn-198 is glycosylated (N-linked (GlcNAc...) asparagine). 2 positions are modified to iodotyrosine: Tyr-234 and Tyr-258. A Thyroglobulin type-1 4 domain is found at 298-358; sequence PTKCEVERFA…TRRPSEPLSC (61 aa). Cystine bridges form between Cys-301–Cys-319, Cys-330–Cys-336, Cys-338–Cys-358, Cys-364–Cys-621, Cys-408–Cys-609, Cys-632–Cys-637, Cys-639–Cys-659, Cys-663–Cys-688, and Cys-699–Cys-704. 3 N-linked (GlcNAc...) asparagine glycosylation sites follow: Asn-485, Asn-497, and Asn-546. 3 Thyroglobulin type-1 domains span residues 606–659, 660–727, and 728–923; these read SQGC…RPRC, PTAC…PKQC, and PTPC…VPAC. Tyr-705 carries the iodotyrosine; alternate modification. Position 705 is a thyroxine; alternate (Tyr-705). The residue at position 705 (Tyr-705) is a Triiodothyronine; alternate. Tyr-705 is subject to Diiodotyrosine; alternate. Intrachain disulfides connect Cys-706/Cys-727, Cys-731/Cys-764, Cys-775/Cys-900, Cys-902/Cys-923, Cys-927/Cys-1033, Cys-1044/Cys-1051, Cys-1053/Cys-1079, Cys-1128/Cys-1147, Cys-1151/Cys-1171, Cys-1183/Cys-1190, Cys-1192/Cys-1212, Cys-1237/Cys-1287, and Cys-1262/Cys-1278. Asn-749 is a glycosylation site (N-linked (GlcNAc...) asparagine). The residue at position 786 (Tyr-786) is an Iodotyrosine. A glycan (N-linked (GlcNAc...) asparagine) is linked at Asn-855. Tyr-868 carries the iodotyrosine; alternate modification. The residue at position 868 (Tyr-868) is a Diiodotyrosine; alternate. A Diiodotyrosine modification is found at Tyr-885. A glycan (N-linked (GlcNAc...) asparagine) is linked at Asn-949. Tyr-994 carries the post-translational modification Iodotyrosine; alternate. The residue at position 994 (Tyr-994) is a Diiodotyrosine; alternate. 3 Thyroglobulin type-1 domains span residues 1021-1079, 1088-1147, and 1148-1212; these read SGPL…PTPC, LSAW…SAPC, and PGLC…QPAC. N-linked (GlcNAc...) asparagine glycosylation is present at Asn-1142. Tyr-1241 carries the post-translational modification Iodotyrosine. Thyroxine is present on Tyr-1241. N-linked (GlcNAc...) asparagine glycans are attached at residues Asn-1296 and Asn-1384. 13 disulfides stabilise this stretch: Cys-1372-Cys-1392, Cys-1395-Cys-1406, Cys-1409-Cys-1423, Cys-1426-Cys-1443, Cys-1447-Cys-1456, Cys-1476-Cys-1498, Cys-1535-Cys-1559, Cys-1539-Cys-1545, Cys-1571-Cys-1594, Cys-1656-Cys-1681, Cys-1660-Cys-1666, Cys-1665-Cys-1766, and Cys-1692-Cys-1709. 3 Type II repeats span residues 1389-1402, 1403-1419, and 1420-1436; these read PLGC…SYFQ, EEQC…EQTG, and SLAC…TSVG. Tyr-1400 bears the Iodotyrosine; alternate mark. At Tyr-1400 the chain carries Diiodotyrosine; alternate. The Thyroglobulin type-1 11 domain maps to 1444–1498; it reads VTACQRDEAGLQCDQDGQYRASQRDRASGKAFCVDSEGRRLPWSETQAPLVDAQC. The stretch at 1535–1655 is one Type IIIA repeat; it reads CLADCARDEA…GASLTEAHLF (121 aa). The Type IIIB repeat unit spans residues 1656–1823; it reads CLLACDRDSC…LFSLQQAHLW (168 aa). An N-linked (GlcNAc...) asparagine glycan is attached at Asn-1800. Intrachain disulfides connect Cys-1824–Cys-1850, Cys-1828–Cys-1835, Cys-1859–Cys-1870, Cys-1927–Cys-1955, Cys-1931–Cys-1937, Cys-1936–Cys-2007, Cys-1966–Cys-1979, Cys-2061–Cys-2085, Cys-2065–Cys-2071, and Cys-2094–Cys-2103. One copy of the Type IIIA repeat lies at 1824–1926; it reads CLSRCVQEPS…DKAISSGFFE (103 aa). Residues 1927 to 2060 form a Type IIIB repeat; it reads CERLCDVDPC…VGDFSAARER (134 aa). The N-linked (GlcNAc...) asparagine glycan is linked to Asn-1944. The Type IIIA repeat unit spans residues 2061 to 2118; the sequence is CLLECSRHQACLVTTLQTRPGAVRCMFYADTQSCTHSLQAQNCQLLLREEATHIYRKP. Tyr-2115 is subject to Iodotyrosine. Residues 2119–2692 are cholinesterase-like (ChEL); sequence DIPLPGLGSS…PELASKSYSK (574 aa). 2 N-linked (GlcNAc...) asparagine glycosylation sites follow: Asn-2181 and Asn-2226. Tyr-2467 is modified (thyroxine). An Iodotyrosine; alternate modification is found at Tyr-2500. A Thyroxine; alternate modification is found at Tyr-2500. The residue at position 2500 (Tyr-2500) is a Triiodothyronine; alternate. Tyr-2500 carries the diiodotyrosine; alternate modification. 2 positions are modified to iodotyrosine: Tyr-2514 and Tyr-2544. An intrachain disulfide couples Cys-2518 to Cys-2642. Tyr-2624 carries the diiodotyrosine modification. The segment covering 2658-2671 has biased composition (acidic residues); it reads EAEDGPLAESEEED. Residues 2658–2692 form a disordered region; sequence EAEDGPLAESEEEDRPGLTEDLLGLPELASKSYSK. Iodotyrosine; alternate is present on Tyr-2690. At Tyr-2690 the chain carries Thyroxine; alternate. Residue Tyr-2690 is modified to Triiodothyronine; alternate. Tyr-2690 carries the post-translational modification Diiodotyrosine; alternate.

It belongs to the type-B carboxylesterase/lipase family. In terms of assembly, monomer. Homodimer (via ChEL region); occurs in the endoplasmic reticulum and is required for export to the Golgi apparatus. Homooligomer; disulfide-linked; stored in this form in the thyroid follicle lumen. In terms of processing, iodinated on tyrosine residues by TPO. There are 4 pairs of iodinated tyrosines used for coupling: acceptor Tyr-24 is coupled to donor Tyr-149 or Tyr-234, acceptor Tyr-2500 is coupled to donor Tyr-2467, acceptor Tyr-2690 in monomer 1 is coupled to donor Tyr-2690 in monomer 2 and acceptor Tyr-1241 in monomer 1 is coupled to donor Tyr-108 in monomer 2. Sulfated tyrosines are desulfated during iodination. Post-translationally, undergoes sequential proteolysis by cathepsins to release thyroxine (T4) and triiodothyronine (T3) hormones. In the thyroid follicle lumen, cross-linked TG (storage form) is solubilized by limited proteolysis mediated by cathepsins CTSB and/or CTSL. Partially cleaved TG is further processed by CTSK/cathepsin K and/or CTSL resulting in the release of T4. Following endocytosis, further processing occurs leading to the release of T3 and more T4 hormones. As to expression, expressed in thyroid epithelial cells.

It localises to the secreted. In terms of biological role, acts as a substrate for the production of iodinated thyroid hormones thyroxine (T4) and triiodothyronine (T3). The synthesis of T3 and T4 involves iodination of selected tyrosine residues of TG/thyroglobulin followed by their oxidative coupling. Following TG re-internalization and lysosomal-mediated proteolysis, T3 and T4 are released from the polypeptide backbone leading to their secretion into the bloodstream. One dimer produces 7 thyroid hormone molecules. This is Thyroglobulin from Sus scrofa (Pig).